The sequence spans 1186 residues: Tricalbin-1 (1186 aa).

The segment at 1 to 50 (MAKEDTGVTAPKKPETAQVANINGIDKLEPPKTKEETESSKSVSSEKAAH) is disordered. Residues 1–106 (MAKEDTGVTA…NIIPDSLYGD (106 aa)) lie on the Cytoplasmic side of the membrane. Over residues 26-39 (DKLEPPKTKEETES) the composition is skewed to basic and acidic residues. A helical membrane pass occupies residues 107–127 (WYHSVAIFFIGGVASFALGHY). Position 128 (Lys128) is a topological domain, extracellular. The chain crosses the membrane as a helical span at residues 129 to 149 (FSMGSAFFVIVITSLLYRTSA). Residues 150–1186 (KKYRGSIREL…HEMGEEETKF (1037 aa)) lie on the Cytoplasmic side of the membrane. Residues 172 to 375 (DYESLEWLNA…PPFSLQLNIP (204 aa)) form the SMP-LTD domain. C2 domains follow at residues 366 to 487 (PPFS…RNLK), 512 to 636 (EKKL…IKIT), and 640 to 757 (RPVR…DKYE). Residues 795–822 (LEEIQDLDKVNKKKKALELRKSAIDEKK) adopt a coiled-coil conformation. The region spanning 976-1094 (PIDTKQLPAN…KVEGTTELDV (119 aa)) is the C2 4 domain. Ser1000 carries the post-translational modification Phosphoserine. Ca(2+) is bound by residues Asp1008, Asp1014, Asp1064, Asp1066, Ser1069, and Asp1072.

It belongs to the tricalbin family. Interacts with TCB2 via its C-terminal domain. Ca(2+) serves as cofactor.

It localises to the cell membrane. The protein localises to the endoplasmic reticulum membrane. Its function is as follows. May play a role in membrane trafficking. This chain is Tricalbin-1 (TCB1), found in Saccharomyces cerevisiae (strain ATCC 204508 / S288c) (Baker's yeast).